Here is a 469-residue protein sequence, read N- to C-terminus: Aspartyl/glutamyl-tRNA(Asn/Gln) amidotransferase subunit B (469 aa).

This sequence belongs to the GatB/GatE family. GatB subfamily. As to quaternary structure, heterotrimer of A, B and C subunits.

It catalyses the reaction L-glutamyl-tRNA(Gln) + L-glutamine + ATP + H2O = L-glutaminyl-tRNA(Gln) + L-glutamate + ADP + phosphate + H(+). It carries out the reaction L-aspartyl-tRNA(Asn) + L-glutamine + ATP + H2O = L-asparaginyl-tRNA(Asn) + L-glutamate + ADP + phosphate + 2 H(+). Functionally, allows the formation of correctly charged Asn-tRNA(Asn) or Gln-tRNA(Gln) through the transamidation of misacylated Asp-tRNA(Asn) or Glu-tRNA(Gln) in organisms which lack either or both of asparaginyl-tRNA or glutaminyl-tRNA synthetases. The reaction takes place in the presence of glutamine and ATP through an activated phospho-Asp-tRNA(Asn) or phospho-Glu-tRNA(Gln). In Thermus thermophilus (strain ATCC BAA-163 / DSM 7039 / HB27), this protein is Aspartyl/glutamyl-tRNA(Asn/Gln) amidotransferase subunit B.